Here is a 1039-residue protein sequence, read N- to C-terminus: uncharacterized protein (1039 aa).

An N-terminal signal peptide occupies residues 1 to 28 (MKLFPRTLLKILVVSFILNFGVTSKSYA). A run of 6 helical transmembrane segments spans residues 326–346 (IVTAFLTLYVMLFGAKILLAG), 354–374 (YINFILKIIFVTYFSIGLNIT), 387–407 (MIQWAFPFLLNGINGLASWVM), 491–511 (MLVSLALAYPLLVISVAAFMV), 517–537 (CMVSIVILGILAPLFVPMFLF), and 551–571 (MISFLLQPMVVVTFMITMFSV). A disordered region spans residues 654–680 (KPNQTCDPKAADADTKCNPKPGDSSTS). The helical transmembrane segment at 710 to 730 (IKDILLALVTACFTLYLMYNF) threads the bilayer. 3 disordered regions span residues 799 to 875 (LVKG…PTTV), 917 to 949 (IKEAVPESQKEEPKEPRVKHTTEVEPELNLDEN), and 1004 to 1039 (LYRSVGGRAKDKATERNDGTIENRSKKIDSGSDENP). A compositionally biased stretch (gly residues) spans 802–811 (GSGGGGGSEG). The span at 812-836 (GDSFTSGGLRETSSTAATPSSALSS) shows a compositional bias: low complexity. The span at 843-861 (GTATPSSASEEMLDTSFSN) shows a compositional bias: polar residues. 2 stretches are compositionally biased toward basic and acidic residues: residues 917–939 (IKEAVPESQKEEPKEPRVKHTTE) and 1004–1033 (LYRSVGGRAKDKATERNDGTIENRSKKIDS).

The protein belongs to the TrbL/VirB6 family.

The protein localises to the cell membrane. This is an uncharacterized protein from Rickettsia bellii (strain RML369-C).